Reading from the N-terminus, the 202-residue chain is Adapter protein MecA 2 (202 aa).

It belongs to the MecA family. As to quaternary structure, homodimer.

Its function is as follows. Enables the recognition and targeting of unfolded and aggregated proteins to the ClpC protease or to other proteins involved in proteolysis. Acts negatively in the development of competence by binding ComK and recruiting it to the ClpCP protease. When overexpressed, inhibits sporulation. Also involved in Spx degradation by ClpC. In Bacillus cereus (strain ATCC 14579 / DSM 31 / CCUG 7414 / JCM 2152 / NBRC 15305 / NCIMB 9373 / NCTC 2599 / NRRL B-3711), this protein is Adapter protein MecA 2 (mecA2).